The chain runs to 146 residues: General odorant-binding protein 19a (146 aa).

The signal sequence occupies residues 1–22 (MKFHLLLVCVAISLGPIPQSEA). 3 cysteine pairs are disulfide-bonded: Cys40–Cys72, Cys68–Cys126, and Cys113–Cys135.

The protein belongs to the PBP/GOBP family. Expressed in adult olfactory system. Expressed exclusively in a subset of chemosensory sensilla on the third antennal segment.

The protein resides in the secreted. Functionally, present in the aqueous fluid surrounding olfactory sensory dendrites and are thought to aid in the capture and transport of hydrophobic odorants into and through this fluid. The polypeptide is General odorant-binding protein 19a (Obp19a) (Drosophila melanogaster (Fruit fly)).